A 912-amino-acid chain; its full sequence is Translation initiation factor IF-2 (912 aa).

A disordered region spans residues 26-297 (SDQGEFVKSA…RGRKSKRAKR (272 aa)). Residues 56–74 (KPAPAASNGAAAEAAAPPK) show a composition bias toward low complexity. Over residues 100–120 (APEPPAAPAAPAAPAPKPSPA) the composition is skewed to pro residues. The span at 121-131 (ARPAAAEAAAP) shows a compositional bias: low complexity. Pro residues-rich tracts occupy residues 132–152 (APAP…PGAP), 173–183 (PRPQAPRPGAP), and 192–218 (NMPP…PGGG). Residues 219–283 (PRPGGAGRPG…GAAGAFGRPG (65 aa)) are compositionally biased toward gly residues. Basic residues predominate over residues 287–296 (KRGRKSKRAK). The 172-residue stretch at 408–579 (TRPPVVTVMG…AVLLTADAAL (172 aa)) folds into the tr-type G domain. Positions 417-424 (GHVDHGKT) are G1. 417–424 (GHVDHGKT) contacts GTP. Positions 442-446 (GITQH) are G2. The segment at 467–470 (DTPG) is G3. Residues 467–471 (DTPGH) and 521–524 (NKID) contribute to the GTP site. A G4 region spans residues 521-524 (NKID). Residues 557-559 (SAR) form a G5 region.

The protein belongs to the TRAFAC class translation factor GTPase superfamily. Classic translation factor GTPase family. IF-2 subfamily.

It localises to the cytoplasm. One of the essential components for the initiation of protein synthesis. Protects formylmethionyl-tRNA from spontaneous hydrolysis and promotes its binding to the 30S ribosomal subunits. Also involved in the hydrolysis of GTP during the formation of the 70S ribosomal complex. This chain is Translation initiation factor IF-2, found in Mycobacteroides abscessus (strain ATCC 19977 / DSM 44196 / CCUG 20993 / CIP 104536 / JCM 13569 / NCTC 13031 / TMC 1543 / L948) (Mycobacterium abscessus).